The sequence spans 181 residues: Oligoribonuclease (181 aa).

The Exonuclease domain maps to 8–171 (LIWIDLEMTG…DDIRESVAEL (164 aa)). The active site involves Y129.

This sequence belongs to the oligoribonuclease family. In terms of assembly, homodimer.

The protein resides in the cytoplasm. Functionally, 3'-to-5' exoribonuclease specific for small oligoribonucleotides. This Escherichia coli O139:H28 (strain E24377A / ETEC) protein is Oligoribonuclease.